Here is a 444-residue protein sequence, read N- to C-terminus: Spermatogenesis-associated protein 1 (444 aa).

Basic and acidic residues predominate over residues 145-160; that stretch reads GTIHRPDSLSLSKDEP. Positions 145–229 are disordered; sequence GTIHRPDSLS…DEGEEDDKAT (85 aa). A coiled-coil region spans residues 268–403; that stretch reads SLLKIEREKI…RKLDTDKMKL (136 aa).

As to quaternary structure, interacts with IFT20.

It localises to the cytoplasmic vesicle. It is found in the secretory vesicle. The protein localises to the acrosome. The polypeptide is Spermatogenesis-associated protein 1 (Spata1) (Rattus norvegicus (Rat)).